The chain runs to 331 residues: Zinc finger protein 660 (331 aa).

The span at 1–12 (MRRKTRNFKHKT) shows a compositional bias: basic residues. The disordered stretch occupies residues 1-35 (MRRKTRNFKHKTVKDNKVLTEGSDQESEKDNSQCC). Ser-23 carries the post-translational modification Phosphoserine. 10 consecutive C2H2-type zinc fingers follow at residues 50-72 (YVCT…ERIH), 78-100 (YKCK…RRIH), 106-128 (YTCS…QGIH), 134-156 (YECK…HRVH), 162-184 (YSCI…QRMH), 190-212 (YKCK…QRIH), 218-240 (YECD…QRLH), 246-268 (YKCN…QRVH), 274-296 (YKCN…LRTH), and 302-324 (YKCS…QRKH).

This sequence belongs to the krueppel C2H2-type zinc-finger protein family.

Its subcellular location is the nucleus. Its function is as follows. May be involved in transcriptional regulation. In Homo sapiens (Human), this protein is Zinc finger protein 660 (ZNF660).